A 363-amino-acid polypeptide reads, in one-letter code: Pyrimidine monooxygenase RutA (363 aa).

Residues 49–50, Asn-115, Glu-124, 140–141, and Ser-190 each bind FMN; these read IK and RY.

This sequence belongs to the NtaA/SnaA/DszA monooxygenase family. RutA subfamily.

The catalysed reaction is uracil + FMNH2 + NADH + O2 = (Z)-3-ureidoacrylate + FMN + NAD(+) + H2O + H(+). The enzyme catalyses thymine + FMNH2 + NADH + O2 = (Z)-2-methylureidoacrylate + FMN + NAD(+) + H2O + H(+). Its function is as follows. Catalyzes the pyrimidine ring opening between N-3 and C-4 by an unusual flavin hydroperoxide-catalyzed mechanism, adding oxygen atoms in the process to yield ureidoacrylate peracid, that immediately reacts with FMN forming ureidoacrylate and FMN-N(5)-oxide. The FMN-N(5)-oxide reacts spontaneously with NADH to produce FMN. Requires the flavin reductase RutF to regenerate FMN in vivo. In Escherichia coli O127:H6 (strain E2348/69 / EPEC), this protein is Pyrimidine monooxygenase RutA.